A 310-amino-acid chain; its full sequence is UDP-N-acetylenolpyruvoylglucosamine reductase (310 aa).

The FAD-binding PCMH-type domain occupies 35 to 203; that stretch reads RAGGAAEALV…TRVRFALRKG (169 aa). The active site involves Arg-183. Ser-232 acts as the Proton donor in catalysis. Residue Glu-302 is part of the active site.

This sequence belongs to the MurB family. It depends on FAD as a cofactor.

The protein resides in the cytoplasm. The catalysed reaction is UDP-N-acetyl-alpha-D-muramate + NADP(+) = UDP-N-acetyl-3-O-(1-carboxyvinyl)-alpha-D-glucosamine + NADPH + H(+). It participates in cell wall biogenesis; peptidoglycan biosynthesis. Its function is as follows. Cell wall formation. This chain is UDP-N-acetylenolpyruvoylglucosamine reductase, found in Myxococcus xanthus (strain DK1622).